The chain runs to 312 residues: Nucleosome assembly protein 1-like 4 (312 aa).

A coiled-coil region spans residues Val-24–Glu-78. Residues Leu-45 to Gln-60 carry the Nuclear export signal motif. A disordered region spans residues Glu-288–Ala-312.

This sequence belongs to the nucleosome assembly protein (NAP) family.

It localises to the nucleus. Its subcellular location is the cytoplasm. May modulate chromatin structure by regulation of nucleosome assembly/disassembly. This Oryza sativa subsp. indica (Rice) protein is Nucleosome assembly protein 1-like 4.